The following is a 152-amino-acid chain: Neuromedin-S (152 aa).

The signal sequence occupies residues M1–G26. 3 consecutive propeptides follow at residues A27–R69, F70–R105, and M106–R108. N144 is subject to Asparagine amide. Positions Y147–Q152 are excised as a propeptide.

It belongs to the NmU family. In terms of tissue distribution, expressed in the CNS, spleen and testis. Specifically expressed in the suprachiasmatic nuclei (SCN) of the hypothalamus.

The protein localises to the secreted. Functionally, implicated in the regulation of circadian rhythms through autocrine and/or paracrine actions. Stimulates the contraction of rectum and elevation of blood pressure. The chain is Neuromedin-S (Nms) from Rattus norvegicus (Rat).